The primary structure comprises 486 residues: Siroheme synthase (486 aa).

Residues 1–203 (MNYFPIFANL…RQNTLAEREL (203 aa)) are precorrin-2 dehydrogenase /sirohydrochlorin ferrochelatase. NAD(+) is bound by residues 22–23 (AV) and 43–44 (KH). Serine 128 bears the Phosphoserine mark. A uroporphyrinogen-III C-methyltransferase region spans residues 217-486 (GSVSLVGAGP…LGTGQEQQAA (270 aa)). Proline 226 is a binding site for S-adenosyl-L-methionine. Aspartate 249 serves as the catalytic Proton acceptor. Lysine 271 functions as the Proton donor in the catalytic mechanism. Residues 302–304 (GGD), valine 307, 332–333 (TA), methionine 384, and glycine 413 each bind S-adenosyl-L-methionine.

The protein in the N-terminal section; belongs to the precorrin-2 dehydrogenase / sirohydrochlorin ferrochelatase family. It in the C-terminal section; belongs to the precorrin methyltransferase family.

It catalyses the reaction uroporphyrinogen III + 2 S-adenosyl-L-methionine = precorrin-2 + 2 S-adenosyl-L-homocysteine + H(+). It carries out the reaction precorrin-2 + NAD(+) = sirohydrochlorin + NADH + 2 H(+). The enzyme catalyses siroheme + 2 H(+) = sirohydrochlorin + Fe(2+). Its pathway is cofactor biosynthesis; adenosylcobalamin biosynthesis; precorrin-2 from uroporphyrinogen III: step 1/1. It functions in the pathway cofactor biosynthesis; adenosylcobalamin biosynthesis; sirohydrochlorin from precorrin-2: step 1/1. The protein operates within porphyrin-containing compound metabolism; siroheme biosynthesis; precorrin-2 from uroporphyrinogen III: step 1/1. It participates in porphyrin-containing compound metabolism; siroheme biosynthesis; siroheme from sirohydrochlorin: step 1/1. Its pathway is porphyrin-containing compound metabolism; siroheme biosynthesis; sirohydrochlorin from precorrin-2: step 1/1. Its function is as follows. Multifunctional enzyme that catalyzes the SAM-dependent methylations of uroporphyrinogen III at position C-2 and C-7 to form precorrin-2 via precorrin-1. Then it catalyzes the NAD-dependent ring dehydrogenation of precorrin-2 to yield sirohydrochlorin. Finally, it catalyzes the ferrochelation of sirohydrochlorin to yield siroheme. In Neisseria meningitidis serogroup A / serotype 4A (strain DSM 15465 / Z2491), this protein is Siroheme synthase.